Consider the following 84-residue polypeptide: Large ribosomal subunit protein bL27 (84 aa).

Positions 1–21 (MAHKKGQGSTRNGRDSHSKRL) are disordered. A compositionally biased stretch (basic and acidic residues) spans 12 to 21 (NGRDSHSKRL).

It belongs to the bacterial ribosomal protein bL27 family.

In Methylacidiphilum infernorum (isolate V4) (Methylokorus infernorum (strain V4)), this protein is Large ribosomal subunit protein bL27.